The chain runs to 187 residues: MAITEPILKEAQERMKKAEAALQRELGNIRAGRANASLLNRISADYYGAQTPLNQMAAITVPEPRVLMVTPFDKSALKEIEKAILASDLGISPANDGSAIRLVIPQLTEERRKELAKDVKAEGERAKVAVRNVRRDAMEALKKGHKDGQFTDDQLHQLEDQAQKLTDQAGKDVDAIVADKEKEILEG.

Belongs to the RRF family.

The protein resides in the cytoplasm. Its function is as follows. Responsible for the release of ribosomes from messenger RNA at the termination of protein biosynthesis. May increase the efficiency of translation by recycling ribosomes from one round of translation to another. This Lactiplantibacillus plantarum (strain ATCC BAA-793 / NCIMB 8826 / WCFS1) (Lactobacillus plantarum) protein is Ribosome-recycling factor.